Reading from the N-terminus, the 803-residue chain is MTFNHKKMEPKWQQYWSEHNTFKTTEDKNKENFYALDMFPYPSGAGLHVGHPEGYTATDILSRMKRMQGKNVLHPIGWDAFGLPAEQYAIDTGNDPEEFTALNIANFTRQIKSLGFSYDWDREINTTDPEYYKWTQWIFEKLYENGLAYEAEIAVNWCPALGTVLANEEVIDGKSERGGFPVFRKPMRQWMLKITAYADRLLDDLDLVDWPENIKDMQRNWIGRSEGAEVTFKIKDSDETFNVFTTRPDTLFGATYTVFAPEHELIEKITTPEQKEAVEAYKKQVELKSELERTDLAKDKTGVFTGAYAINPINGEEVPIWIADYVLIQYGTGAIMAVPAHDERDFEFAQQFGLNIRPVLEGGDVTKEAFTGDGPHINSDFLNGLAKAEAITAAIDWLEKEGIGSRKITYRLRDWLFSRQRYWGEPIPVIHWEDGETTLVPEEELPLLLPKATEIKPSGTGESPLANLHDWVNVTDENGRKGRRETNTMPQWAGSSWYFLRYIDPKNSEAIADKEKLAEWLPVDVYIGGAEHAVLHLLYARFWHKFLYDIGVVPTKEPFQKLFNQGMILGENNEKMSKSRGNVVNPDEVVEKYGADTLRLYEMFMGPLEASIAWNENGLEGARKFLDRIWRLLVTEEGTLAEKVTTDANANLEKAYHHMVKTVTNHYENLRFNTGISQLMIFINEAYKQDTIPKQYVEGFVQLLSPIAPHLAEELWEILGHTETISYVAWPTYDETKLVEDEVEIVLQVNGKVKSKITVAKSLGKEELEKIAQEDNKMKENLEGKTIRKVIVVPGKLVNIVAN.

The 'HIGH' region motif lies at 40 to 51; the sequence is PYPSGAGLHVGH. The 'KMSKS' region motif lies at 575–579; sequence KMSKS. An ATP-binding site is contributed by lysine 578.

This sequence belongs to the class-I aminoacyl-tRNA synthetase family.

Its subcellular location is the cytoplasm. The enzyme catalyses tRNA(Leu) + L-leucine + ATP = L-leucyl-tRNA(Leu) + AMP + diphosphate. This is Leucine--tRNA ligase from Listeria monocytogenes serovar 1/2a (strain ATCC BAA-679 / EGD-e).